Reading from the N-terminus, the 1148-residue chain is Small G protein signaling modulator 1 (1148 aa).

The region spanning 36–190 (HEDSSHIISF…EYTKMKTADH (155 aa)) is the RUN domain. The tract at residues 256 to 297 (LLYGKNNVLVQPRDDMEAVPGYLSLHQTADVMTLKWTPNQLM) is important for interaction with RAB9A and RAB9B. The segment at 301 to 350 (VGDLDYEKSVYWDYAMTIRLEEIVYLHCHQQVDSGGTVVLVSQDGIQRPP) is required for interaction with RAP family members. Disordered regions lie at residues 377 to 411 (DPPL…DKDD), 700 to 830 (DSTI…PREE), and 871 to 894 (GWRS…EEPE). Positions 385–397 (GKGKVFPKLRKRS) are enriched in basic residues. In terms of domain architecture, Rab-GAP TBC spans 617 to 1081 (GIQPEIRKAV…LVWETIWAAK (465 aa)). The span at 702–716 (TISNESSQSCSSGRQ) shows a compositional bias: polar residues. Positions 742 to 751 (AEGRLEEKQP) are enriched in basic and acidic residues. Positions 757-802 (NLVNGTCSPDSGHPSSHNFSSGLSEHSEPSLSTEDSVLDAQRNTPT) are enriched in polar residues. Basic and acidic residues-rich tracts occupy residues 805–816 (RPRDGSVDDRQS) and 871–883 (GWRS…HGQA). Residues 884–894 (DSEDNLSEEPE) show a composition bias toward acidic residues.

This sequence belongs to the RUTBC family. As to quaternary structure, interacts with RAB9A (GTP-bound form) and RAB9B (GTP-bound form); has much lower affinity for GDP-bound RAB9A and RAB9B. Interacts with RAB3A, RAB4A, RAB5A, RAB8A, RAB11A, RAP1A, RAP1B, RAP2A and RAP2B. No interaction with RAB27A. As to expression, mainly expressed in brain, heart and testis.

Its subcellular location is the golgi apparatus. It is found in the trans-Golgi network. The protein localises to the cytoplasmic vesicle membrane. It localises to the cytoplasm. Its function is as follows. Interacts with numerous Rab family members, functioning as Rab effector for some, and as GTPase activator for others. Promotes GTP hydrolysis by RAB34 and RAB36. Probably functions as a GTPase effector with RAB9A and RAB9B; does not stimulate GTP hydrolysis with RAB9A and RAB9B. In Homo sapiens (Human), this protein is Small G protein signaling modulator 1 (SGSM1).